A 518-amino-acid polypeptide reads, in one-letter code: Lycopene epsilon cyclase, chloroplastic (518 aa).

100–128 is an NAD(+) binding site; sequence LIVIGCGPAGMSLAAEAGKRGLSVGLIGP. A run of 2 helical transmembrane segments spans residues 435–455 and 469–489; these read FFLFGLALILQLDIDGIRIFF and FLGSTLSSAGLIWFAFYMFAI.

Belongs to the lycopene cyclase family. In terms of tissue distribution, expressed in leaves and roots. Detected in flower buds and lips.

The protein resides in the plastid. It is found in the chloroplast membrane. The catalysed reaction is a carotenoid psi-end group = a carotenoid epsilon-end group. Its pathway is carotenoid biosynthesis; alpha-zeacarotene biosynthesis. The protein operates within carotenoid biosynthesis; delta-carotene biosynthesis. Its function is as follows. Catalyzes the single epsilon-cyclization reaction which converts lycopene to delta-carotene and neurosporene to alpha-zeacarotene. Required for lutein biosynthesis. The sequence is that of Lycopene epsilon cyclase, chloroplastic from Oncidium hybrid cultivar (Orchid).